A 399-amino-acid chain; its full sequence is Cytohesin-3 (399 aa).

Positions 14 to 61 (EDLSLEEREELLDIRRRKKELIDDIERLKYEIAEVMTEIDNLTSVEES) form a coiled coil. Positions 77–206 (FNMDPKKGIQ…IIMLNTSLHN (130 aa)) constitute an SEC7 domain. Positions 264-380 (NPDREGWLLK…WMKSIKASIS (117 aa)) constitute a PH domain. A 1,2-diacyl-sn-glycero-3-phospho-(1D-myo-inositol-3,4,5-trisphosphate) contacts are provided by residues 273–280 (KLGGRVKT), arginine 284, tyrosine 295, arginine 305, and asparagine 354. The tract at residues 391 to 399 (RKRRIANKK) is C-terminal autoinhibitory region.

In terms of assembly, interacts with TAMALIN. Interacts with FRMD4A. Interacts with FRMD4B.

The protein resides in the cytoplasm. It localises to the cytosol. The protein localises to the cell membrane. Its subcellular location is the cell junction. It is found in the adherens junction. The protein resides in the tight junction. Functionally, promotes guanine-nucleotide exchange on ARF1. Promotes the activation of ARF factors through replacement of GDP with GTP. Plays a role in the epithelial polarization. This is Cytohesin-3 (Cyth3) from Mus musculus (Mouse).